A 98-amino-acid polypeptide reads, in one-letter code: NADH-ubiquinone oxidoreductase chain 4L (98 aa).

3 helical membrane passes run 1-21 (MSVV…GLLV), 30-50 (LLCL…TVLT), and 61-81 (IILL…LVMI).

This sequence belongs to the complex I subunit 4L family. As to quaternary structure, core subunit of respiratory chain NADH dehydrogenase (Complex I) which is composed of 45 different subunits.

Its subcellular location is the mitochondrion inner membrane. It carries out the reaction a ubiquinone + NADH + 5 H(+)(in) = a ubiquinol + NAD(+) + 4 H(+)(out). In terms of biological role, core subunit of the mitochondrial membrane respiratory chain NADH dehydrogenase (Complex I) which catalyzes electron transfer from NADH through the respiratory chain, using ubiquinone as an electron acceptor. Part of the enzyme membrane arm which is embedded in the lipid bilayer and involved in proton translocation. The chain is NADH-ubiquinone oxidoreductase chain 4L (MT-ND4L) from Lontra canadensis (North American river otter).